Here is a 349-residue protein sequence, read N- to C-terminus: Alcohol dehydrogenase 1 (349 aa).

Positions 46, 69, 100, 103, 106, 114, and 156 each coordinate Zn(2+). NAD(+) contacts are provided by residues 180-186, Asp-204, Lys-208, 270-272, and Arg-342; these read GAGGGLG and VGL.

This sequence belongs to the zinc-containing alcohol dehydrogenase family. As to quaternary structure, homotetramer. Zn(2+) is required as a cofactor.

It catalyses the reaction a primary alcohol + NAD(+) = an aldehyde + NADH + H(+). The enzyme catalyses a secondary alcohol + NAD(+) = a ketone + NADH + H(+). In Caenorhabditis elegans, this protein is Alcohol dehydrogenase 1.